The primary structure comprises 428 residues: Gamma-glutamyl phosphate reductase (428 aa).

The protein belongs to the gamma-glutamyl phosphate reductase family.

It is found in the cytoplasm. The catalysed reaction is L-glutamate 5-semialdehyde + phosphate + NADP(+) = L-glutamyl 5-phosphate + NADPH + H(+). It functions in the pathway amino-acid biosynthesis; L-proline biosynthesis; L-glutamate 5-semialdehyde from L-glutamate: step 2/2. Its function is as follows. Catalyzes the NADPH-dependent reduction of L-glutamate 5-phosphate into L-glutamate 5-semialdehyde and phosphate. The product spontaneously undergoes cyclization to form 1-pyrroline-5-carboxylate. This is Gamma-glutamyl phosphate reductase from Hyphomonas neptunium (strain ATCC 15444).